A 626-amino-acid polypeptide reads, in one-letter code: Chaperone protein HtpG (626 aa).

The segment at 1 to 339 (MSQNQETRGF…SNDLPLNVSR (339 aa)) is a; substrate-binding. The b stretch occupies residues 340–555 (EILQDNKITA…NDQMTTQMAK (216 aa)). The segment at 556 to 626 (LFAAAGQPVP…FIKRINKLLG (71 aa)) is c.

Belongs to the heat shock protein 90 family. Homodimer.

The protein localises to the cytoplasm. Its function is as follows. Molecular chaperone. Has ATPase activity. This chain is Chaperone protein HtpG, found in Haemophilus influenzae (strain PittEE).